A 201-amino-acid chain; its full sequence is NAD(P)H dehydrogenase (quinone) (201 aa).

One can recognise a Flavodoxin-like domain in the interval 4 to 192 (VLVLYYSSYG…TIARFQGQHI (189 aa)). FMN is bound by residues 10–15 (SSYGHV) and 80–82 (TRF). Position 12 (Y12) interacts with NAD(+). W100 lines the substrate pocket. FMN is bound by residues 115-121 (STASQHG) and H136.

The protein belongs to the WrbA family. FMN is required as a cofactor.

The enzyme catalyses a quinone + NADH + H(+) = a quinol + NAD(+). It catalyses the reaction a quinone + NADPH + H(+) = a quinol + NADP(+). The polypeptide is NAD(P)H dehydrogenase (quinone) (Chromohalobacter salexigens (strain ATCC BAA-138 / DSM 3043 / CIP 106854 / NCIMB 13768 / 1H11)).